Reading from the N-terminus, the 437-residue chain is UDP-N-acetylmuramate--L-alanine ligase (437 aa).

ATP is bound at residue 108–114 (GAHGKTS).

It belongs to the MurCDEF family.

Its subcellular location is the cytoplasm. It carries out the reaction UDP-N-acetyl-alpha-D-muramate + L-alanine + ATP = UDP-N-acetyl-alpha-D-muramoyl-L-alanine + ADP + phosphate + H(+). Its pathway is cell wall biogenesis; peptidoglycan biosynthesis. Cell wall formation. The sequence is that of UDP-N-acetylmuramate--L-alanine ligase from Staphylococcus epidermidis (strain ATCC 12228 / FDA PCI 1200).